We begin with the raw amino-acid sequence, 327 residues long: DNA-directed RNA polymerase subunit alpha (327 aa).

The segment at 1–233 is alpha N-terminal domain (alpha-NTD); that stretch reads MVREKVKVST…NLFIPFLHVE (233 aa). Residues 267-327 are alpha C-terminal domain (alpha-CTD); sequence LAFQYIFIDQ…KKILDILEKK (61 aa).

It belongs to the RNA polymerase alpha chain family. In plastids the minimal PEP RNA polymerase catalytic core is composed of four subunits: alpha, beta, beta', and beta''. When a (nuclear-encoded) sigma factor is associated with the core the holoenzyme is formed, which can initiate transcription.

Its subcellular location is the plastid. It is found in the chloroplast. It carries out the reaction RNA(n) + a ribonucleoside 5'-triphosphate = RNA(n+1) + diphosphate. In terms of biological role, DNA-dependent RNA polymerase catalyzes the transcription of DNA into RNA using the four ribonucleoside triphosphates as substrates. This Lobularia maritima (Sweet alyssum) protein is DNA-directed RNA polymerase subunit alpha.